Consider the following 320-residue polypeptide: UV DNA damage endonuclease (320 aa).

This sequence belongs to the uve1/UvsE family.

In terms of biological role, component in a DNA repair pathway. Removal of UV LIGHT damaged nucleotides. Recognizes pyrimidine dimers and cleave a phosphodiester bond immediately 5' to the lesion. This is UV DNA damage endonuclease from Bacillus velezensis (strain DSM 23117 / BGSC 10A6 / LMG 26770 / FZB42) (Bacillus amyloliquefaciens subsp. plantarum).